The primary structure comprises 497 residues: FAD-linked oxidoreductase fogF (497 aa).

A signal peptide spans 1–18 (MRRNILTALACSWLTAHA). In terms of domain architecture, FAD-binding PCMH-type spans 59–229 (NAPTYAGAIS…TSATYKLHKL (171 aa)).

It belongs to the oxygen-dependent FAD-linked oxidoreductase family. FAD serves as cofactor.

It functions in the pathway secondary metabolite biosynthesis. Its function is as follows. FAD-linked oxidoreductase; part of the gene cluster that mediates the biosynthesis of flavoglaucin and congeners (including aspergin, dihydroauroglaucin and auroglaucin), prenylated salicylaldehyde derivatives carrying a saturated or an unsaturated C-7 side chain. The PKS fogA releases the carboxylic acid (8E,10E,12E)-3,5,7-trihydroxytetradeca-8,10,12-trienoic acid as its product, as well as derivatives with one and two double bonds. FogA is indeed able to reduce the initial triketide, thus being at least partially responsible for the differently saturated heptyl side chains of flavoglaucin congeners. The oxidoreductases fogB, fogC and fogD modify the nascent polyketide in fogA-bound form and, together, fogA, fogB, fogC and fogD are necessary for the formation of the aromatic core and the cyclized PKS products are released as salicyl alcohols. In particular, fogB is responsible for oxidation of a hydroxyl group or reduction of remaining double bond(s) at the C-7 residue whereas fogD is probably involved in the reductive release of the modified PKS products. The cytochrome P450 monooxygenase fogE is then responsible for the hydroxylation at C-3 of the benzene ring. The fogE products are substrates of the prenyltransferase fogH and the prenylated benzyl alcohols are subsequently oxidized by the fogF to produce the final aryl aldehydes flavoglaucin and congeners. The short-chain dehydrogenase fogG does not seem to be involved in the biosynthesis of the prenylated salicylaldehyde derivatives. This Aspergillus ruber (strain CBS 135680) protein is FAD-linked oxidoreductase fogF.